The primary structure comprises 332 residues: Holliday junction branch migration complex subunit RuvB (332 aa).

Positions 1-182 (MKLNKNSELK…FGLILKLNYY (182 aa)) are large ATPase domain (RuvB-L). Residues Leu21, Arg22, Gly63, Lys66, Thr67, Thr68, 129-131 (EDY), Arg172, Tyr182, and Arg219 each bind ATP. Thr67 provides a ligand contact to Mg(2+). The tract at residues 183–253 (SEDELELIIK…ISEIALEKLT (71 aa)) is small ATPAse domain (RuvB-S). The tract at residues 256–332 (KNGLDDADYT…FKLFKNDKIK (77 aa)) is head domain (RuvB-H). DNA is bound by residues Arg311 and Arg316.

Belongs to the RuvB family. Homohexamer. Forms an RuvA(8)-RuvB(12)-Holliday junction (HJ) complex. HJ DNA is sandwiched between 2 RuvA tetramers; dsDNA enters through RuvA and exits via RuvB. An RuvB hexamer assembles on each DNA strand where it exits the tetramer. Each RuvB hexamer is contacted by two RuvA subunits (via domain III) on 2 adjacent RuvB subunits; this complex drives branch migration. In the full resolvosome a probable DNA-RuvA(4)-RuvB(12)-RuvC(2) complex forms which resolves the HJ.

It localises to the cytoplasm. It catalyses the reaction ATP + H2O = ADP + phosphate + H(+). Its function is as follows. The RuvA-RuvB-RuvC complex processes Holliday junction (HJ) DNA during genetic recombination and DNA repair, while the RuvA-RuvB complex plays an important role in the rescue of blocked DNA replication forks via replication fork reversal (RFR). RuvA specifically binds to HJ cruciform DNA, conferring on it an open structure. The RuvB hexamer acts as an ATP-dependent pump, pulling dsDNA into and through the RuvAB complex. RuvB forms 2 homohexamers on either side of HJ DNA bound by 1 or 2 RuvA tetramers; 4 subunits per hexamer contact DNA at a time. Coordinated motions by a converter formed by DNA-disengaged RuvB subunits stimulates ATP hydrolysis and nucleotide exchange. Immobilization of the converter enables RuvB to convert the ATP-contained energy into a lever motion, pulling 2 nucleotides of DNA out of the RuvA tetramer per ATP hydrolyzed, thus driving DNA branch migration. The RuvB motors rotate together with the DNA substrate, which together with the progressing nucleotide cycle form the mechanistic basis for DNA recombination by continuous HJ branch migration. Branch migration allows RuvC to scan DNA until it finds its consensus sequence, where it cleaves and resolves cruciform DNA. The polypeptide is Holliday junction branch migration complex subunit RuvB (Phytoplasma mali (strain AT)).